Reading from the N-terminus, the 173-residue chain is Shikimate kinase (173 aa).

Residue 14–19 (GAGKST) coordinates ATP. Ser18 provides a ligand contact to Mg(2+). 3 residues coordinate substrate: Asp36, Arg60, and Gly82. Arg120 is a binding site for ATP. Position 140 (Arg140) interacts with substrate. Position 157 (Gln157) interacts with ATP.

It belongs to the shikimate kinase family. As to quaternary structure, monomer. The cofactor is Mg(2+).

The protein resides in the cytoplasm. It carries out the reaction shikimate + ATP = 3-phosphoshikimate + ADP + H(+). It functions in the pathway metabolic intermediate biosynthesis; chorismate biosynthesis; chorismate from D-erythrose 4-phosphate and phosphoenolpyruvate: step 5/7. In terms of biological role, catalyzes the specific phosphorylation of the 3-hydroxyl group of shikimic acid using ATP as a cosubstrate. The polypeptide is Shikimate kinase (Buchnera aphidicola subsp. Acyrthosiphon pisum (strain APS) (Acyrthosiphon pisum symbiotic bacterium)).